The sequence spans 267 residues: Eukaryotic translation initiation factor 3 subunit J (267 aa).

The segment at 1–70 (MSWNDDDVFA…KDKKSSTDQV (70 aa)) is disordered. A compositionally biased stretch (acidic residues) spans 24–38 (WDAEEPIMESWDAEE). Residues 39 to 66 (TPAKKETSPKPDSKKNAKKDSKKDKKSS) are compositionally biased toward basic and acidic residues. Residues 192–220 (IESIRQSIATLNVLMKDKEREERRARLAK) are a coiled coil.

It belongs to the eIF-3 subunit J family. As to quaternary structure, component of the eukaryotic translation initiation factor 3 (eIF-3) complex.

It localises to the cytoplasm. Functionally, component of the eukaryotic translation initiation factor 3 (eIF-3) complex, which is involved in protein synthesis of a specialized repertoire of mRNAs and, together with other initiation factors, stimulates binding of mRNA and methionyl-tRNAi to the 40S ribosome. The eIF-3 complex specifically targets and initiates translation of a subset of mRNAs involved in cell proliferation. In Vanderwaltozyma polyspora (strain ATCC 22028 / DSM 70294 / BCRC 21397 / CBS 2163 / NBRC 10782 / NRRL Y-8283 / UCD 57-17) (Kluyveromyces polysporus), this protein is Eukaryotic translation initiation factor 3 subunit J.